Here is a 382-residue protein sequence, read N- to C-terminus: Chaperone protein DnaJ (382 aa).

The 66-residue stretch at 5–70 folds into the J domain; sequence DYYEVLGVSR…DKKAAYDRYG (66 aa). Residues 141 to 219 form a CR-type zinc finger; that stretch reads GVQKTINVPA…CHGAGRVEKE (79 aa). Residues Cys154, Cys157, Cys171, Cys174, Cys193, Cys196, Cys207, and Cys210 each coordinate Zn(2+). 4 CXXCXGXG motif repeats span residues 154 to 161, 171 to 178, 193 to 200, and 207 to 214; these read CDACKGTG, CPTCSGMG, CPTCNGMG, and CKVCHGAG.

It belongs to the DnaJ family. In terms of assembly, homodimer. The cofactor is Zn(2+).

Its subcellular location is the cytoplasm. In terms of biological role, participates actively in the response to hyperosmotic and heat shock by preventing the aggregation of stress-denatured proteins and by disaggregating proteins, also in an autonomous, DnaK-independent fashion. Unfolded proteins bind initially to DnaJ; upon interaction with the DnaJ-bound protein, DnaK hydrolyzes its bound ATP, resulting in the formation of a stable complex. GrpE releases ADP from DnaK; ATP binding to DnaK triggers the release of the substrate protein, thus completing the reaction cycle. Several rounds of ATP-dependent interactions between DnaJ, DnaK and GrpE are required for fully efficient folding. Also involved, together with DnaK and GrpE, in the DNA replication of plasmids through activation of initiation proteins. The protein is Chaperone protein DnaJ of Cereibacter sphaeroides (strain ATCC 17029 / ATH 2.4.9) (Rhodobacter sphaeroides).